The primary structure comprises 600 residues: Protein GPR107 (600 aa).

The first 39 residues, 1-39 (MAALAPVGSPASRGPRLAAGLRLLPMLGLLQLLAEPGLG), serve as a signal peptide directing secretion. The Extracellular segment spans residues 40–263 (RVHHLALKDD…YLSAGEIPLP (224 aa)). Asparagine 70 and asparagine 169 each carry an N-linked (GlcNAc...) asparagine glycan. A disulfide bridge links cysteine 109 with cysteine 228. A compositionally biased stretch (polar residues) spans 157-175 (SQEPNVNPASAGNQTQKTQ). The tract at residues 157–185 (SQEPNVNPASAGNQTQKTQDGGKSKRSTV) is disordered. Residues 176 to 185 (DGGKSKRSTV) are compositionally biased toward basic and acidic residues. N-linked (GlcNAc...) asparagine glycosylation is present at asparagine 211. The helical transmembrane segment at 264-284 (KLYISMAFFFFLSGTIWIHIL) threads the bilayer. At 285–293 (RKRRNDVFK) the chain is on the cytoplasmic side. The helical transmembrane segment at 294–314 (IHWLMAALPFTKSLSLVFHAI) threads the bilayer. Over 315 to 337 (DYHYISSQGFPIEGWAVVYYITH) the chain is Extracellular. Residues 338–358 (LLKGALLFITIALIGTGWAFI) form a helical membrane-spanning segment. The Cytoplasmic segment spans residues 359 to 368 (KHILSDKDKK). A helical transmembrane segment spans residues 369–389 (IFMIVIPLQVLANVAYIIIES). Over 390 to 402 (TEEGTTEYGLWKD) the chain is Extracellular. A helical transmembrane segment spans residues 403-423 (SLFLVDLLCCGAILFPVVWSI). Topologically, residues 424-498 (RHLQEASATD…AKLKLFRHYY (75 aa)) are cytoplasmic. Residues 499–519 (VLIVCYIYFTRIIAFLLKLAV) traverse the membrane as a helical segment. Over 520 to 524 (PFQWK) the chain is Extracellular. Residues 525–544 (WLYQLLDETATLVFFVLTGY) form a helical membrane-spanning segment. The Cytoplasmic portion of the chain corresponds to 545-600 (KFRPASDNPYLQLSQEEEDLEMESVVTTSGVMESMKKVKKVTNGSVEPQGEWEGAV).

It belongs to the LU7TM family. Cleaved by FURIN to yield two fragments of 17 and 35 kDa that remain associated via a disulfide bond.

The protein localises to the cell membrane. Its subcellular location is the golgi apparatus. It localises to the trans-Golgi network membrane. Functionally, has been proposed to act as a receptor for neuronostatin, a peptide derived from the somatostatin/SST precursor. Involved in blood sugar regulation through the induction of glucagon in response to low glucose. In terms of biological role, (Microbial infection) Required for intoxication by Pseudomonas aeruginosa exotoxin A and Campylobacter jejuni CDT. May contribute to the retrograde transport of bacterial toxins, including cholera toxin, from the trans-Golgi network to the endoplasmic reticulum. This chain is Protein GPR107 (GPR107), found in Homo sapiens (Human).